We begin with the raw amino-acid sequence, 419 residues long: tRNA(Ile)-lysidine synthase (419 aa).

25-30 (SGGIDS) is an ATP binding site.

The protein belongs to the tRNA(Ile)-lysidine synthase family.

The protein localises to the cytoplasm. It carries out the reaction cytidine(34) in tRNA(Ile2) + L-lysine + ATP = lysidine(34) in tRNA(Ile2) + AMP + diphosphate + H(+). Its function is as follows. Ligates lysine onto the cytidine present at position 34 of the AUA codon-specific tRNA(Ile) that contains the anticodon CAU, in an ATP-dependent manner. Cytidine is converted to lysidine, thus changing the amino acid specificity of the tRNA from methionine to isoleucine. This chain is tRNA(Ile)-lysidine synthase, found in Actinobacillus pleuropneumoniae serotype 7 (strain AP76).